Here is a 256-residue protein sequence, read N- to C-terminus: tRNA pseudouridine synthase A (256 aa).

Asp52 (nucleophile) is an active-site residue. Tyr111 serves as a coordination point for substrate.

Belongs to the tRNA pseudouridine synthase TruA family. In terms of assembly, homodimer.

The enzyme catalyses uridine(38/39/40) in tRNA = pseudouridine(38/39/40) in tRNA. Formation of pseudouridine at positions 38, 39 and 40 in the anticodon stem and loop of transfer RNAs. The sequence is that of tRNA pseudouridine synthase A from Paramagnetospirillum magneticum (strain ATCC 700264 / AMB-1) (Magnetospirillum magneticum).